The chain runs to 565 residues: MEPKTKKQRSLYIPYAGPVLLEFPLLNKGSAFSMEERRNFNLLGLLPEVVETIEEQAERAWIQYQGFKTEIDKHIYLRNIQDTNETLFYRLVNNHLDEMMPVIYTPTVGAACERFSEIYRRSRGVFISYQNRHNMDDILQNVPNHNIKVIVVTDGERILGLGDQGIGGMGIPIGKLSLYTACGGISPAYTLPVVLDVGTNNQQLLNDPLYMGWRNPRITDDEYYEFVDEFIQAVKQRWPDVLLQFEDFAQKNAMPLLNRYRNEICSFNDDIQGTAAVTVGTLIAASRAAGGQLSEKKIVFLGAGSAGCGIAEMIISQTQREGLSEEAARQKVFMVDRFGLLTDKMPNLLPFQTKLVQKRENLSDWDTDSDVLSLLDVVRNVKPDILIGVSGQTGLFTEEIIREMHKHCPRPIVMPLSNPTSRVEATPQDIIAWTEGNALVATGSPFNPVVWKDKIYPIAQCNNAFIFPGIGLGVIASGASRITDEMLMSASETLAQYSPLVLNGEGMVLPELKDIQKVSRAIAFAVGKMAQQQGVAVKTSAEALQQAIDDNFWQAEYRDYRRTSI.

Tyr-104 functions as the Proton donor in the catalytic mechanism. NAD(+) is bound at residue Arg-157. The active-site Proton acceptor is the Lys-175. A divalent metal cation-binding residues include Glu-246, Asp-247, and Asp-270. 2 residues coordinate NAD(+): Asp-270 and Asn-418.

It belongs to the malic enzymes family. Homotetramer. The cofactor is Mg(2+). Mn(2+) is required as a cofactor.

The catalysed reaction is (S)-malate + NAD(+) = pyruvate + CO2 + NADH. The enzyme catalyses oxaloacetate + H(+) = pyruvate + CO2. This Escherichia coli (strain K12 / MC4100 / BW2952) protein is NAD-dependent malic enzyme.